The sequence spans 285 residues: Protein HtrL (285 aa).

The protein is Protein HtrL of Escherichia coli (strain K12).